The primary structure comprises 434 residues: MFS-type transporter pynF (434 aa).

Residues 1–13 (MSHDQRSPSEEVS) show a composition bias toward basic and acidic residues. The segment at 1 to 34 (MSHDQRSPSEEVSRTALSKPASESTIVGDGHHPL) is disordered. 12 helical membrane passes run 44–64 (WLVV…LNAF), 84–104 (IAWI…VVGP), 109–129 (VGAT…LMLT), 138–158 (LILA…YPTI), 171–191 (IALG…TEII), 203–223 (TVRA…VLII), 249–269 (LLFS…FFYL), 280–302 (VTGA…VLTG), 311–331 (FNVI…LHKI), 334–354 (SGAI…LISL), 375–395 (LMMG…GALL), and 402–422 (WYGF…VTIL).

It belongs to the major facilitator superfamily. Monocarboxylate porter (TC 2.A.1.13) family.

The protein localises to the cell membrane. In terms of biological role, MFS-type transporter; part of the gene cluster that mediates the biosynthesis of pyranonigrins, a family of antioxidative compounds. May be involved in the secretion of pyranonigrins. The chain is MFS-type transporter pynF from Aspergillus niger (strain ATCC MYA-4892 / CBS 513.88 / FGSC A1513).